A 157-amino-acid chain; its full sequence is Peptide methionine sulfoxide reductase MsrA (157 aa).

C13 is an active-site residue.

Belongs to the MsrA Met sulfoxide reductase family.

It catalyses the reaction L-methionyl-[protein] + [thioredoxin]-disulfide + H2O = L-methionyl-(S)-S-oxide-[protein] + [thioredoxin]-dithiol. It carries out the reaction [thioredoxin]-disulfide + L-methionine + H2O = L-methionine (S)-S-oxide + [thioredoxin]-dithiol. In terms of biological role, has an important function as a repair enzyme for proteins that have been inactivated by oxidation. Catalyzes the reversible oxidation-reduction of methionine sulfoxide in proteins to methionine. The sequence is that of Peptide methionine sulfoxide reductase MsrA from Methanococcus maripaludis (strain C5 / ATCC BAA-1333).